The primary structure comprises 412 residues: Serine/threonine transporter SstT (412 aa).

The next 10 helical transmembrane spans lie at 16 to 36 (LVAQIVVGLLAGALLALFLPG), 44 to 64 (LGDLFVQALKAVAPVLVFVLV), 82 to 102 (IIVLYALGTLSAAAVAVLASF), 115 to 135 (TDVIPPAGVGAVLNTLLFNIV), 141 to 161 (ALLNGNFIGILAWAIGLGFAF), 179 to 199 (VTLIVKVVIRFAPLGVFGLVA), 217 to 237 (LLVLVGAMLFMALVMNPLIVF), 298 to 318 (MGGAAITITVLTLAAVNTLGI), 330 to 350 (LLAAVCACGASGVAGGSLLLI), and 357 to 377 (FGISNDLAMQVVAVGFIIGVV).

This sequence belongs to the dicarboxylate/amino acid:cation symporter (DAACS) (TC 2.A.23) family.

The protein resides in the cell inner membrane. It catalyses the reaction L-serine(in) + Na(+)(in) = L-serine(out) + Na(+)(out). It carries out the reaction L-threonine(in) + Na(+)(in) = L-threonine(out) + Na(+)(out). Its function is as follows. Involved in the import of serine and threonine into the cell, with the concomitant import of sodium (symport system). This Stutzerimonas stutzeri (strain A1501) (Pseudomonas stutzeri) protein is Serine/threonine transporter SstT.